Reading from the N-terminus, the 521-residue chain is Cytochrome P450 1A1 (521 aa).

A substrate-binding site is contributed by Phe229. Cys463 contacts heme.

This sequence belongs to the cytochrome P450 family. Heme serves as cofactor.

The protein localises to the endoplasmic reticulum membrane. Its subcellular location is the microsome membrane. It carries out the reaction an organic molecule + reduced [NADPH--hemoprotein reductase] + O2 = an alcohol + oxidized [NADPH--hemoprotein reductase] + H2O + H(+). Functionally, cytochromes P450 are a group of heme-thiolate monooxygenases. They oxidize a variety of structurally unrelated compounds, including steroids, fatty acids, and xenobiotics. This is Cytochrome P450 1A1 (cyp1a1) from Chelon saliens (Leaping mullet).